Consider the following 868-residue polypeptide: Pentatricopeptide repeat-containing protein At2g27610 (868 aa).

18 PPR repeats span residues 57 to 91 (DRES…GMEM), 92 to 126 (DCSI…GFLD), 127 to 157 (DVSV…MKER), 158 to 192 (NVVT…GTQP), 193 to 227 (NSFT…GLDK), 228 to 258 (TIPV…TEVK), 259 to 293 (SVVT…YVRL), 294 to 328 (SESS…GFLF), 329 to 359 (DQNI…IGCV), 361 to 395 (NVVS…GVRP), 396 to 426 (NEFT…NYER), 427 to 457 (SSTV…IDDK), 458 to 492 (DIVA…GIKP), 493 to 528 (NEFT…RLDS), 529 to 559 (SLCV…QREK), 560 to 594 (DLVS…KVKM), 595 to 625 (DGVT…MVRD), and 631 to 661 (TKEH…MPNP). Residues 666 to 741 (IWRTILAACR…EPGYSWIEVK (76 aa)) are type E motif. The segment at 742-772 (NKTYSFLAGDRSHPLKDQIYMKLEDLSTRLK) is type E(+) motif. Residues 773 to 868 (DLGYEPDTSY…DGVCSCGDFW (96 aa)) form a type DYW motif region.

This sequence belongs to the PPR family. PCMP-H subfamily.

This chain is Pentatricopeptide repeat-containing protein At2g27610 (PCMP-H60), found in Arabidopsis thaliana (Mouse-ear cress).